We begin with the raw amino-acid sequence, 252 residues long: Probable transcriptional regulatory protein THA_1246 (252 aa).

This sequence belongs to the TACO1 family.

It localises to the cytoplasm. This chain is Probable transcriptional regulatory protein THA_1246, found in Thermosipho africanus (strain TCF52B).